A 314-amino-acid chain; its full sequence is MTSVIFMGTPEFSVPVLEGLIEAGYEIRAVVTQPDKKVGRKQKIAKTPAKIAAEKHDLPVLQPVKLSGSEEMNQLIDMHADLIVTAAYGQFLPTKFLKSVNIAAVNVHGSLLPKYRGGAPIQYSLINGDKETGITIMEMVKKMDAGDIYAQEAIKIEPEDNAGTLFSKLSILGRDLLLKTLPSIIDGSVKKTPQDPDKVVFSPNITKEQERLSIDMTAEQANNMIRALNPDPGAYLMINGQRFKVWEAEVASDSSSLEAGTVVANKGRFAISFADNTVLNLLEVQPSGKKRMNIKNFLNGQGSKFVTGEEIVDK.

110 to 113 (SLLP) contributes to the (6S)-5,6,7,8-tetrahydrofolate binding site.

This sequence belongs to the Fmt family.

It catalyses the reaction L-methionyl-tRNA(fMet) + (6R)-10-formyltetrahydrofolate = N-formyl-L-methionyl-tRNA(fMet) + (6S)-5,6,7,8-tetrahydrofolate + H(+). In terms of biological role, attaches a formyl group to the free amino group of methionyl-tRNA(fMet). The formyl group appears to play a dual role in the initiator identity of N-formylmethionyl-tRNA by promoting its recognition by IF2 and preventing the misappropriation of this tRNA by the elongation apparatus. The polypeptide is Methionyl-tRNA formyltransferase (Lactobacillus acidophilus (strain ATCC 700396 / NCK56 / N2 / NCFM)).